Here is a 209-residue protein sequence, read N- to C-terminus: Large ribosomal subunit protein bL25 (209 aa).

The interval 190-209 (PDASAAPVAAPAAPAKKGKK) is disordered.

It belongs to the bacterial ribosomal protein bL25 family. CTC subfamily. As to quaternary structure, part of the 50S ribosomal subunit; part of the 5S rRNA/L5/L18/L25 subcomplex. Contacts the 5S rRNA. Binds to the 5S rRNA independently of L5 and L18.

Its function is as follows. This is one of the proteins that binds to the 5S RNA in the ribosome where it forms part of the central protuberance. The chain is Large ribosomal subunit protein bL25 from Delftia acidovorans (strain DSM 14801 / SPH-1).